A 419-amino-acid polypeptide reads, in one-letter code: DNA ligase (419 aa).

The interval 1–120 (MLSQFPGQCS…ARQKRGAHTN (120 aa)) is NTD. The AD domain stretch occupies residues 121 to 317 (RGMIPPMLVK…NYHSPHLAKL (197 aa)). ATP contacts are provided by histidine 149, lysine 151, glutamate 203, and phenylalanine 232. The active-site N6-AMP-lysine intermediate is the lysine 151. Glutamate 203 is a binding site for a divalent metal cation. Glutamate 291 lines the a divalent metal cation pocket. The ATP site is built by isoleucine 294 and lysine 316. The tract at residues 318–419 (KPLLDAEFIL…REPINVLEII (102 aa)) is OB domain.

The protein belongs to the ATP-dependent DNA ligase family. A divalent metal cation is required as a cofactor.

Its subcellular location is the virion. It catalyses the reaction ATP + (deoxyribonucleotide)n-3'-hydroxyl + 5'-phospho-(deoxyribonucleotide)m = (deoxyribonucleotide)n+m + AMP + diphosphate.. Functionally, very low-fidelity DNA ligase that seals nicks in double-stranded DNA during DNA repair. Together with the viral repair DNA polymerase X, fills the single nucleotide gaps generated by the AP endonuclease. It is not essential for viral replication and recombination. Displays a very low adenylation activity towards DNA with 3'-dideoxy- or 3'-amino-terminated nicks compared to regular nick DNA. This is DNA ligase (LIG) from Ornithodoros (relapsing fever ticks).